Here is a 190-residue protein sequence, read N- to C-terminus: Lipid A acyltransferase PagP (190 aa).

A signal peptide spans 1–29 (MYVAMIIRKYFLIIALLLMPWLAIPSVSA). Catalysis depends on residues His-62, Asp-105, and Ser-106.

Belongs to the lipid A palmitoyltransferase family. As to quaternary structure, homodimer.

The protein resides in the cell outer membrane. The catalysed reaction is a lipid A + a 1,2-diacyl-sn-glycero-3-phosphocholine = a hepta-acyl lipid A + a 2-acyl-sn-glycero-3-phosphocholine. It catalyses the reaction a lipid IVA + a 1,2-diacyl-sn-glycero-3-phosphocholine = a lipid IVB + a 2-acyl-sn-glycero-3-phosphocholine. It carries out the reaction a lipid IIA + a 1,2-diacyl-sn-glycero-3-phosphocholine = a lipid IIB + a 2-acyl-sn-glycero-3-phosphocholine. Functionally, transfers a fatty acid residue from the sn-1 position of a phospholipid to the N-linked hydroxyfatty acid chain on the proximal unit of lipid A or its precursors. Required for resistance to cationic antimicrobial peptides (CAMPs). Modifications of lipid A with an acyl chain allow to evade host immune defenses by resisting antimicrobial peptides and attenuating the inflammatory response to infection triggered by lipopolysaccharide through the Toll-like receptor 4 (TLR4) signal transduction pathway. The sequence is that of Lipid A acyltransferase PagP from Salmonella typhimurium (strain LT2 / SGSC1412 / ATCC 700720).